The chain runs to 515 residues: ATP synthase subunit alpha (515 aa).

Residue 171–178 (GDRQTGKT) participates in ATP binding.

The protein belongs to the ATPase alpha/beta chains family. In terms of assembly, F-type ATPases have 2 components, CF(1) - the catalytic core - and CF(0) - the membrane proton channel. CF(1) has five subunits: alpha(3), beta(3), gamma(1), delta(1), epsilon(1). CF(0) has three main subunits: a(1), b(2) and c(9-12). The alpha and beta chains form an alternating ring which encloses part of the gamma chain. CF(1) is attached to CF(0) by a central stalk formed by the gamma and epsilon chains, while a peripheral stalk is formed by the delta and b chains.

The protein resides in the cell inner membrane. The catalysed reaction is ATP + H2O + 4 H(+)(in) = ADP + phosphate + 5 H(+)(out). Produces ATP from ADP in the presence of a proton gradient across the membrane. The alpha chain is a regulatory subunit. This chain is ATP synthase subunit alpha, found in Xanthomonas axonopodis pv. citri (strain 306).